The sequence spans 81 residues: Cytochrome b559 subunit alpha (81 aa).

Residues Val21 to Trp35 form a helical membrane-spanning segment. His23 contacts heme.

This sequence belongs to the PsbE/PsbF family. Heterodimer of an alpha subunit and a beta subunit. PSII is composed of 1 copy each of membrane proteins PsbA, PsbB, PsbC, PsbD, PsbE, PsbF, PsbH, PsbI, PsbJ, PsbK, PsbL, PsbM, PsbT, PsbX, PsbY, PsbZ, Psb30/Ycf12, peripheral proteins PsbO, CyanoQ (PsbQ), PsbU, PsbV and a large number of cofactors. It forms dimeric complexes. It depends on heme b as a cofactor.

Its subcellular location is the cellular thylakoid membrane. Functionally, this b-type cytochrome is tightly associated with the reaction center of photosystem II (PSII). PSII is a light-driven water:plastoquinone oxidoreductase that uses light energy to abstract electrons from H(2)O, generating O(2) and a proton gradient subsequently used for ATP formation. It consists of a core antenna complex that captures photons, and an electron transfer chain that converts photonic excitation into a charge separation. The polypeptide is Cytochrome b559 subunit alpha (Crocosphaera subtropica (strain ATCC 51142 / BH68) (Cyanothece sp. (strain ATCC 51142))).